A 20-amino-acid polypeptide reads, in one-letter code: Brevinin-1DYa (20 aa).

Cysteines 14 and 20 form a disulfide.

As to expression, expressed by the skin glands.

The protein localises to the secreted. Functionally, antimicrobial peptide. Has low activity against the Gram-positive bacterium S.aureus and the Gram-negative bacterium E.coli (MIC&lt;15 uM). Has a strong hemolytic activity. The sequence is that of Brevinin-1DYa from Rana dybowskii (Dybovsky's frog).